The following is a 148-amino-acid chain: uncharacterized protein (148 aa).

This is an uncharacterized protein from Schizosaccharomyces pombe (strain 972 / ATCC 24843) (Fission yeast).